The primary structure comprises 72 residues: Beta-defensin 104A (72 aa).

A signal peptide spans 1 to 22 (MRRLVLLLAISLLLYQDLPVRS). 3 cysteine pairs are disulfide-bonded: cysteine 30-cysteine 57, cysteine 37-cysteine 51, and cysteine 41-cysteine 58.

The protein belongs to the beta-defensin family.

It is found in the secreted. Functionally, has antimicrobial activity. This chain is Beta-defensin 104A (DEFB104A), found in Pongo pygmaeus (Bornean orangutan).